Here is a 1058-residue protein sequence, read N- to C-terminus: Non-canonical non-ribosomal peptide synthetase FUB8 (1058 aa).

The segment at 43–365 (EISRDEPDRV…LASVVMHPDE (323 aa)) is adenylation (A) domain. Residues 566–643 (TTEDVVRSGI…QLSHSVWTHL (78 aa)) enclose the Carrier domain. At serine 601 the chain carries O-(pantetheine 4'-phosphoryl)serine. The interval 680–921 (LTGTTGEIGS…IPIDLLAEVI (242 aa)) is thioester reductase (TR) domain.

It participates in mycotoxin biosynthesis. In terms of biological role, non-canonical non-ribosomal peptide synthetase; part of the gene cluster that mediates the biosynthesis of fusaric acid, a mycotoxin with low to moderate toxicity to animals and humans, but with high phytotoxic properties. L-aspartate is suggested as fusaric acid amino acid precursor that is activated and further processed to O-acetyl-L-homoserine by cluster enzymes aspartate kinase FUB3 and homoserine O-acetyltransferase FUB5, as well as enzymes of the primary metabolism. The polyketide synthase (PKS) FUB1 generates the triketide trans-2-hexenal which is presumptively released by the hydrolase FUB4 and linked to the NRPS-bound amino acid precursor by NAD(P)-dependent dehydrogenase FUB6. FUB1, FUB4, and the non-canonical NRPS Fub8 may form an enzyme complex. Further processing of the NRPS-bound intermediate might be carried out by FUB6 and the sulfhydrylase FUB7, enabling a spontaneous electrocyclization to close the carbon backbone of fusaric acid. Dihydrofusaric acid is likely to be released via reduction by the thioester reductase (TR) domain of FUB8 whereupon the final oxidation to fusaric acid may (also) be performed by the FMN-dependent dehydrogenase FUB9. The protein is Non-canonical non-ribosomal peptide synthetase FUB8 of Gibberella moniliformis (strain M3125 / FGSC 7600) (Maize ear and stalk rot fungus).